Consider the following 746-residue polypeptide: NAD(P)H-quinone oxidoreductase subunit 5, chloroplastic (746 aa).

Transmembrane regions (helical) follow at residues 9–29, 39–59, 89–109, 125–145, 147–167, 185–205, 222–242, 261–281, 283–303, 330–350, 357–377, 399–419, 428–448, 545–565, 608–628, and 726–746; these read WIIP…LLLV, IWAF…TNLS, IDSL…MVLI, FAYM…PNLI, IYIF…FWFT, GDFG…SFEF, NVLN…GAVA, TPIS…FLVA, LLPL…IGVI, LGYI…FHSI, ALLF…LGYS, ATFL…CFWS, WLYS…TAFY, TMLF…SVGI, IYSV…YGSV, and LFFS…YLYF.

Belongs to the complex I subunit 5 family. In terms of assembly, NDH is composed of at least 16 different subunits, 5 of which are encoded in the nucleus.

The protein resides in the plastid. The protein localises to the chloroplast thylakoid membrane. It catalyses the reaction a plastoquinone + NADH + (n+1) H(+)(in) = a plastoquinol + NAD(+) + n H(+)(out). The enzyme catalyses a plastoquinone + NADPH + (n+1) H(+)(in) = a plastoquinol + NADP(+) + n H(+)(out). NDH shuttles electrons from NAD(P)H:plastoquinone, via FMN and iron-sulfur (Fe-S) centers, to quinones in the photosynthetic chain and possibly in a chloroplast respiratory chain. The immediate electron acceptor for the enzyme in this species is believed to be plastoquinone. Couples the redox reaction to proton translocation, and thus conserves the redox energy in a proton gradient. The sequence is that of NAD(P)H-quinone oxidoreductase subunit 5, chloroplastic (ndhF) from Amborella trichopoda.